The sequence spans 157 residues: Endoribonuclease YbeY (157 aa).

Zn(2+) contacts are provided by His-123, His-127, and His-133.

This sequence belongs to the endoribonuclease YbeY family. Requires Zn(2+) as cofactor.

It localises to the cytoplasm. Single strand-specific metallo-endoribonuclease involved in late-stage 70S ribosome quality control and in maturation of the 3' terminus of the 16S rRNA. The polypeptide is Endoribonuclease YbeY (Limosilactobacillus fermentum (strain NBRC 3956 / LMG 18251) (Lactobacillus fermentum)).